The sequence spans 683 residues: DNA ligase (683 aa).

NAD(+) is bound by residues 43–47, 92–93, and glutamate 125; these read DAEYD and SL. Residue lysine 127 is the N6-AMP-lysine intermediate of the active site. Residues arginine 148, glutamate 185, lysine 303, and lysine 327 each contribute to the NAD(+) site. Residues cysteine 421, cysteine 424, cysteine 439, and cysteine 445 each contribute to the Zn(2+) site. One can recognise a BRCT domain in the interval 604 to 683; the sequence is IADNPLKGKN…QEFIALTGEN (80 aa).

Belongs to the NAD-dependent DNA ligase family. LigA subfamily. Requires Mg(2+) as cofactor. Mn(2+) is required as a cofactor.

The catalysed reaction is NAD(+) + (deoxyribonucleotide)n-3'-hydroxyl + 5'-phospho-(deoxyribonucleotide)m = (deoxyribonucleotide)n+m + AMP + beta-nicotinamide D-nucleotide.. In terms of biological role, DNA ligase that catalyzes the formation of phosphodiester linkages between 5'-phosphoryl and 3'-hydroxyl groups in double-stranded DNA using NAD as a coenzyme and as the energy source for the reaction. It is essential for DNA replication and repair of damaged DNA. This is DNA ligase from Actinobacillus pleuropneumoniae serotype 5b (strain L20).